Here is a 364-residue protein sequence, read N- to C-terminus: Metalloendoproteinase 1-MMP (364 aa).

The N-terminal stretch at 1 to 28 (MSRNLIYRRNRALCFVLILFCFPYRFGA) is a signal peptide. Residues 29 to 149 (RNTPEAEQST…NNDFLHTTAH (121 aa)) constitute a propeptide, activation peptide. A glycan (N-linked (GlcNAc...) asparagine) is linked at Asn49. The short motif at 128–135 (PRCGVSDT) is the Cysteine switch element. Residue Cys130 participates in Zn(2+) binding. Residue Asp211 participates in Ca(2+) binding. Residues His221 and Asp223 each contribute to the Zn(2+) site. Ca(2+) is bound by residues Asp228 and Gly229. His236 serves as a coordination point for Zn(2+). Gly243 contacts Ca(2+). His246 provides a ligand contact to Zn(2+). Residues Asp248 and Glu251 each coordinate Ca(2+). His275 contributes to the Zn(2+) binding site. Residue Glu276 is part of the active site. Zn(2+)-binding residues include His279 and His285. Asn338 is a glycosylation site (N-linked (GlcNAc...) asparagine). Gly339 carries GPI-anchor amidated glycine lipidation. A propeptide spans 340 to 364 (TVSHRFLSGNFIGYVLLVVGLILFL) (removed in mature form).

This sequence belongs to the peptidase M10A family. Matrix metalloproteinases (MMPs) subfamily. It depends on Ca(2+) as a cofactor. Zn(2+) is required as a cofactor. Mostly expressed in flowers, roots and stems, and, to a lower extent, in leaves.

Its subcellular location is the cell membrane. Its activity is regulated as follows. Inhibited by human TIMP-1 and TIMP-2 and by the peptide hydroxamate inhibitor (BB-94). Repressed by acetohydroxamic acid (AHA). Matrix metalloproteinases (MMPs) or matrixins may play a role in the degradation and remodeling of the extracellular matrix (ECM) during development or in response to stresses. Can cleave myelin basic protein as well as fluorigenic peptide substrates, McaPLANvaDpaAR-NH(2) and McaPChaGNvaHADpa-NH(2) 4-fold more efficiently than McaPLGLDpaAR-NH(2) (QF24). Active on myelin basic protein (MBP) and, to some extent, on McaPLGLDpaAR-NH(2) (QF24) and beta-casein. The chain is Metalloendoproteinase 1-MMP from Arabidopsis thaliana (Mouse-ear cress).